Here is a 287-residue protein sequence, read N- to C-terminus: Transmembrane protein 163 (287 aa).

The tract at residues 1-63 is disordered; that stretch reads METAAGSERR…ESGQFSDGLE (63 aa). The Cytoplasmic segment spans residues 1–86; the sequence is METAAGSERR…HEAQNYRKKA (86 aa). Phosphoserine is present on residues S11, S53, S55, and S59. The interval 40–70 is required for interaction with MCOLN1; that stretch reads EPPQPEEERQLRISESGQFSDGLEDRGLLES. Residues 87–107 traverse the membrane as a helical segment; the sequence is LWVSWFSIIVTLALAVAAFTV. The Extracellular segment spans residues 108 to 114; sequence SVMRYSA. Residues 115–135 form a helical membrane-spanning segment; sequence SAFGFAFDAILDVLSSAIVLW. Over 136–148 the chain is Cytoplasmic; the sequence is RYSNAAAVHSAHR. A helical transmembrane segment spans residues 149–169; the sequence is EYIACVILGVIFLLSSVCIVV. The Extracellular segment spans residues 170–185; it reads KAIHDLSTKLLPEVDD. A helical transmembrane segment spans residues 186 to 206; it reads FLFSVSILSGILCSILAVLKF. Topologically, residues 207–215 are cytoplasmic; the sequence is MLGKVLTSR. The helical transmembrane segment at 216–236 threads the bilayer; the sequence is ALITDGFNSLVGGVMGFSILL. The Extracellular portion of the chain corresponds to 237–253; that stretch reads SAEVFKHNSAVWYLDGS. A helical membrane pass occupies residues 254-274; that stretch reads IGVLIGLTIFAYGVKLLIDMV. Residues 275–287 lie on the Cytoplasmic side of the membrane; sequence PRVRQTRHYEMFE.

It belongs to the TMEM163 family. Homodimer. Interacts with MCOLN1/TRPML1. Interacts with SLC30A1, SLC30A2, SLC30A3 and SLC30A4.

The protein localises to the cytoplasmic vesicle. Its subcellular location is the secretory vesicle. It localises to the synaptic vesicle membrane. It is found in the early endosome membrane. The protein resides in the late endosome membrane. The protein localises to the lysosome membrane. Its subcellular location is the cell membrane. It carries out the reaction Zn(2+)(in) = Zn(2+)(out). In terms of biological role, zinc ion transporter that mediates zinc efflux and plays a crucial role in intracellular zinc homeostasis. Binds the divalent cations Zn(2+), Ni(2+), and to a minor extent Cu(2+). Is a functional modulator of P2X purinoceptors, including P2RX1, P2RX3, P2RX4 and P2RX7. Plays a role in central nervous system development and is required for myelination, and survival and proliferation of oligodendrocytes. The chain is Transmembrane protein 163 (TMEM163) from Bos taurus (Bovine).